A 347-amino-acid polypeptide reads, in one-letter code: GMP reductase (347 aa).

108 to 131 (ADFQKTKDIMAISDEFIFICIDIA) serves as a coordination point for NADP(+). K(+)-binding residues include G181 and G183. The active-site Thioimidate intermediate is the C186. 216–239 (IIGDGGCSCAGDVAKAFGGGADFV) is an NADP(+) binding site.

The protein belongs to the IMPDH/GMPR family. GuaC type 1 subfamily. As to quaternary structure, homotetramer.

The catalysed reaction is IMP + NH4(+) + NADP(+) = GMP + NADPH + 2 H(+). In terms of biological role, catalyzes the irreversible NADPH-dependent deamination of GMP to IMP. It functions in the conversion of nucleobase, nucleoside and nucleotide derivatives of G to A nucleotides, and in maintaining the intracellular balance of A and G nucleotides. The protein is GMP reductase of Vibrio campbellii (strain ATCC BAA-1116).